The primary structure comprises 211 residues: Interleukin-6 (211 aa).

Positions 1 to 24 (MKFLSARDFQPVAFLGLMLLTATA) are cleaved as a signal peptide. C70 and C76 are disulfide-bonded. S79 is modified (phosphoserine). C99 and C109 are disulfide-bonded.

Belongs to the IL-6 superfamily. As to quaternary structure, component of a hexamer of two molecules each of IL6, IL6R and IL6ST; first binds to IL6R to associate with the signaling subunit IL6ST. Interacts with IL6R (via the N-terminal ectodomain); this interaction may be affected by IL6R-binding with SORL1, hence decreasing IL6 cis signaling. Interacts with SORL1 (via the N-terminal ectodomain); this interaction leads to IL6 internalization and lysosomal degradation. May form a trimeric complex with the soluble SORL1 ectodomain and soluble IL6R receptor; this interaction might stabilize circulating IL6, hence promoting IL6 trans signaling.

It is found in the secreted. In terms of biological role, cytokine with a wide variety of biological functions in immunity, tissue regeneration, and metabolism. Binds to IL6R, then the complex associates to the signaling subunit IL6ST/gp130 to trigger the intracellular IL6-signaling pathway. The interaction with the membrane-bound IL6R and IL6ST stimulates 'classic signaling', whereas the binding of IL6 and soluble IL6R to IL6ST stimulates 'trans-signaling'. Alternatively, 'cluster signaling' occurs when membrane-bound IL6:IL6R complexes on transmitter cells activate IL6ST receptors on neighboring receiver cells. Functionally, IL6 is a potent inducer of the acute phase response. Rapid production of IL6 contributes to host defense during infection and tissue injury, but excessive IL6 synthesis is involved in disease pathology. In the innate immune response, is synthesized by myeloid cells, such as macrophages and dendritic cells, upon recognition of pathogens through toll-like receptors (TLRs) at the site of infection or tissue injury. In the adaptive immune response, is required for the differentiation of B-cells into immunoglolin-secreting cells. Plays a major role in the differentiation of CD4(+) T cell subsets. Essential factor for the development of T follicular helper (Tfh) cells that are required for the induction of germinal-center formation. Together with IL21, controls the early generation of Tfh cells and are critical for an effective antibody response to acute viral infection. Required to drive naive CD4(+) T cells to the Th17 lineage, through 'cluster signaling' by dendritic cells. Also required for proliferation of myeloma cells and the survival of plasmablast cells. Acts as an essential factor in bone homeostasis and on vessels directly or indirectly by induction of VEGF, resulting in increased angiogenesis activity and vascular permeability. Induces, through 'trans-signaling' and synergistically with IL1B and TNF, the production of VEGF. Involved in metabolic controls, is discharged into the bloodstream after muscle contraction increasing lipolysis and improving insulin resistance. 'Trans-signaling' in central nervous system regulates energy and glucose homeostasis. Mediates, through GLP-1, crosstalk between insulin-sensitive tissues, intestinal L cells and pancreatic islets to adapt to changes in insulin demand. Also acts as a myokine. Plays a protective role during liver injury, being required for maintenance of tissue regeneration. Also has a pivotal role in iron metabolism by regulating HAMP/hepcidin expression upon inflammation or bacterial infection. Through activation of IL6ST-YAP-NOTCH pathway, induces inflammation-induced epithelial regeneration. The sequence is that of Interleukin-6 from Rattus norvegicus (Rat).